A 717-amino-acid chain; its full sequence is Fatty acid oxidation complex subunit alpha (717 aa).

The interval 1–190 (MIHAGNAITV…KDGAVDAVVA (190 aa)) is enoyl-CoA hydratase/isomerase. D298 is a substrate binding site. The segment at 313 to 717 (HPVNQAAVLG…MAANNKKFYG (405 aa)) is 3-hydroxyacyl-CoA dehydrogenase. NAD(+)-binding positions include M326, D345, 402 to 404 (VTE), K409, and S431. The active-site For 3-hydroxyacyl-CoA dehydrogenase activity is the H452. Residue N455 participates in NAD(+) binding. Residue N502 participates in substrate binding.

This sequence in the N-terminal section; belongs to the enoyl-CoA hydratase/isomerase family. In the C-terminal section; belongs to the 3-hydroxyacyl-CoA dehydrogenase family. As to quaternary structure, heterotetramer of two alpha chains (FadB) and two beta chains (FadA).

It catalyses the reaction a (3S)-3-hydroxyacyl-CoA + NAD(+) = a 3-oxoacyl-CoA + NADH + H(+). It carries out the reaction a (3S)-3-hydroxyacyl-CoA = a (2E)-enoyl-CoA + H2O. The catalysed reaction is a 4-saturated-(3S)-3-hydroxyacyl-CoA = a (3E)-enoyl-CoA + H2O. The enzyme catalyses (3S)-3-hydroxybutanoyl-CoA = (3R)-3-hydroxybutanoyl-CoA. It catalyses the reaction a (3Z)-enoyl-CoA = a 4-saturated (2E)-enoyl-CoA. It carries out the reaction a (3E)-enoyl-CoA = a 4-saturated (2E)-enoyl-CoA. Its pathway is lipid metabolism; fatty acid beta-oxidation. Functionally, involved in the aerobic and anaerobic degradation of long-chain fatty acids via beta-oxidation cycle. Catalyzes the formation of 3-oxoacyl-CoA from enoyl-CoA via L-3-hydroxyacyl-CoA. It can also use D-3-hydroxyacyl-CoA and cis-3-enoyl-CoA as substrate. The protein is Fatty acid oxidation complex subunit alpha of Acinetobacter baumannii (strain ACICU).